Consider the following 334-residue polypeptide: Ribosomal RNA small subunit methyltransferase H (334 aa).

S-adenosyl-L-methionine is bound by residues 34–36 (GGY), Asp52, Ala87, Asp100, and Gln107.

This sequence belongs to the methyltransferase superfamily. RsmH family.

It is found in the cytoplasm. It carries out the reaction cytidine(1402) in 16S rRNA + S-adenosyl-L-methionine = N(4)-methylcytidine(1402) in 16S rRNA + S-adenosyl-L-homocysteine + H(+). Specifically methylates the N4 position of cytidine in position 1402 (C1402) of 16S rRNA. The chain is Ribosomal RNA small subunit methyltransferase H from Maricaulis maris (strain MCS10) (Caulobacter maris).